Reading from the N-terminus, the 207-residue chain is Large ribosomal subunit protein uL4 (207 aa).

Positions Gly-47–Ser-77 are disordered. Basic residues predominate over residues Lys-63–Ser-77.

Belongs to the universal ribosomal protein uL4 family. In terms of assembly, part of the 50S ribosomal subunit.

Its function is as follows. One of the primary rRNA binding proteins, this protein initially binds near the 5'-end of the 23S rRNA. It is important during the early stages of 50S assembly. It makes multiple contacts with different domains of the 23S rRNA in the assembled 50S subunit and ribosome. Forms part of the polypeptide exit tunnel. The protein is Large ribosomal subunit protein uL4 of Symbiobacterium thermophilum (strain DSM 24528 / JCM 14929 / IAM 14863 / T).